We begin with the raw amino-acid sequence, 267 residues long: Regulatory protein VirG (267 aa).

In terms of domain architecture, Response regulatory spans 29–143; sequence HVLLVDDDVA…EFLARIRVAL (115 aa). D78 is modified (4-aspartylphosphate). The segment at residues 155–255 is a DNA-binding region (ompR/PhoB-type); the sequence is RRSFCFTDWT…ARGAGYFFDA (101 aa).

In terms of processing, phosphorylated by wide host range (WHR) VirA protein.

It localises to the cytoplasm. Functionally, virG is required for the positive regulation of at least two vir loci encoded by the Ti plasmid of A.tumefaciens. The sequence is that of Regulatory protein VirG (virG) from Agrobacterium tumefaciens (strain 15955).